The primary structure comprises 853 residues: DNA mismatch repair protein MutS (853 aa).

614 to 621 (GPNMGGKS) serves as a coordination point for ATP.

Belongs to the DNA mismatch repair MutS family.

Functionally, this protein is involved in the repair of mismatches in DNA. It is possible that it carries out the mismatch recognition step. This protein has a weak ATPase activity. The chain is DNA mismatch repair protein MutS from Escherichia coli O1:K1 / APEC.